A 107-amino-acid chain; its full sequence is Large ribosomal subunit protein eL33A (107 aa).

Position 2 is an N-acetylalanine; partial (Ala-2). Lys-47 participates in a covalent cross-link: Glycyl lysine isopeptide (Lys-Gly) (interchain with G-Cter in ubiquitin).

The protein belongs to the eukaryotic ribosomal protein eL33 family. Component of the large ribosomal subunit (LSU). Mature yeast ribosomes consist of a small (40S) and a large (60S) subunit. The 40S small subunit contains 1 molecule of ribosomal RNA (18S rRNA) and 33 different proteins (encoded by 57 genes). The large 60S subunit contains 3 rRNA molecules (25S, 5.8S and 5S rRNA) and 46 different proteins (encoded by 81 genes). N-terminally acetylated by acetyltransferase NatA.

Its subcellular location is the cytoplasm. In terms of biological role, component of the ribosome, a large ribonucleoprotein complex responsible for the synthesis of proteins in the cell. The small ribosomal subunit (SSU) binds messenger RNAs (mRNAs) and translates the encoded message by selecting cognate aminoacyl-transfer RNA (tRNA) molecules. The large subunit (LSU) contains the ribosomal catalytic site termed the peptidyl transferase center (PTC), which catalyzes the formation of peptide bonds, thereby polymerizing the amino acids delivered by tRNAs into a polypeptide chain. The nascent polypeptides leave the ribosome through a tunnel in the LSU and interact with protein factors that function in enzymatic processing, targeting, and the membrane insertion of nascent chains at the exit of the ribosomal tunnel. In Saccharomyces cerevisiae (strain ATCC 204508 / S288c) (Baker's yeast), this protein is Large ribosomal subunit protein eL33A.